The following is a 312-amino-acid chain: Methionyl-tRNA formyltransferase (312 aa).

117–120 (SLLP) serves as a coordination point for (6S)-5,6,7,8-tetrahydrofolate.

The protein belongs to the Fmt family.

It catalyses the reaction L-methionyl-tRNA(fMet) + (6R)-10-formyltetrahydrofolate = N-formyl-L-methionyl-tRNA(fMet) + (6S)-5,6,7,8-tetrahydrofolate + H(+). Functionally, attaches a formyl group to the free amino group of methionyl-tRNA(fMet). The formyl group appears to play a dual role in the initiator identity of N-formylmethionyl-tRNA by promoting its recognition by IF2 and preventing the misappropriation of this tRNA by the elongation apparatus. The sequence is that of Methionyl-tRNA formyltransferase from Bordetella bronchiseptica (strain ATCC BAA-588 / NCTC 13252 / RB50) (Alcaligenes bronchisepticus).